A 921-amino-acid polypeptide reads, in one-letter code: Protein translocase subunit SecA (921 aa).

ATP contacts are provided by residues Gln-87, 105 to 109 (GEGKT), and Asp-515. The tract at residues 872–901 (DMEVAGSTGDRGAALDIQPAPVRSGPKIGR) is disordered. Cys-905, Cys-907, Cys-916, and Cys-917 together coordinate Zn(2+).

This sequence belongs to the SecA family. In terms of assembly, monomer and homodimer. Part of the essential Sec protein translocation apparatus which comprises SecA, SecYEG and auxiliary proteins SecDF-YajC and YidC. Zn(2+) serves as cofactor.

Its subcellular location is the cell inner membrane. The protein localises to the cytoplasm. The catalysed reaction is ATP + H2O + cellular proteinSide 1 = ADP + phosphate + cellular proteinSide 2.. Functionally, part of the Sec protein translocase complex. Interacts with the SecYEG preprotein conducting channel. Has a central role in coupling the hydrolysis of ATP to the transfer of proteins into and across the cell membrane, serving both as a receptor for the preprotein-SecB complex and as an ATP-driven molecular motor driving the stepwise translocation of polypeptide chains across the membrane. The chain is Protein translocase subunit SecA from Polynucleobacter asymbioticus (strain DSM 18221 / CIP 109841 / QLW-P1DMWA-1) (Polynucleobacter necessarius subsp. asymbioticus).